We begin with the raw amino-acid sequence, 680 residues long: UvrABC system protein B (680 aa).

One can recognise a Helicase ATP-binding domain in the interval 27-192 (SNIEAGVTDQ…ERNDYDFHRG (166 aa)). Residue 40–47 (GVTGSGKT) coordinates ATP. The short motif at 93–116 (YYDYYQPEAYVPSSDTYIEKDSSI) is the Beta-hairpin element. Positions 432 to 594 (QVDDLLGECR…IVPATIRKAV (163 aa)) constitute a Helicase C-terminal domain. In terms of domain architecture, UVR spans 637 to 672 (AKQIQQLERDMREAAKELEFERAAELRDRIRLLREH).

Belongs to the UvrB family. As to quaternary structure, forms a heterotetramer with UvrA during the search for lesions. Interacts with UvrC in an incision complex.

It localises to the cytoplasm. In terms of biological role, the UvrABC repair system catalyzes the recognition and processing of DNA lesions. A damage recognition complex composed of 2 UvrA and 2 UvrB subunits scans DNA for abnormalities. Upon binding of the UvrA(2)B(2) complex to a putative damaged site, the DNA wraps around one UvrB monomer. DNA wrap is dependent on ATP binding by UvrB and probably causes local melting of the DNA helix, facilitating insertion of UvrB beta-hairpin between the DNA strands. Then UvrB probes one DNA strand for the presence of a lesion. If a lesion is found the UvrA subunits dissociate and the UvrB-DNA preincision complex is formed. This complex is subsequently bound by UvrC and the second UvrB is released. If no lesion is found, the DNA wraps around the other UvrB subunit that will check the other stand for damage. The polypeptide is UvrABC system protein B (Nitratidesulfovibrio vulgaris (strain DSM 19637 / Miyazaki F) (Desulfovibrio vulgaris)).